The chain runs to 306 residues: Pyridoxal 5'-phosphate synthase subunit PdxS (306 aa).

Asp36 lines the D-ribose 5-phosphate pocket. Lys93 functions as the Schiff-base intermediate with D-ribose 5-phosphate in the catalytic mechanism. Residue Gly165 coordinates D-ribose 5-phosphate. Arg177 lines the D-glyceraldehyde 3-phosphate pocket. D-ribose 5-phosphate-binding positions include Gly226 and 247–248 (GS).

Belongs to the PdxS/SNZ family. In the presence of PdxT, forms a dodecamer of heterodimers.

The enzyme catalyses aldehydo-D-ribose 5-phosphate + D-glyceraldehyde 3-phosphate + L-glutamine = pyridoxal 5'-phosphate + L-glutamate + phosphate + 3 H2O + H(+). Its pathway is cofactor biosynthesis; pyridoxal 5'-phosphate biosynthesis. Its function is as follows. Catalyzes the formation of pyridoxal 5'-phosphate from ribose 5-phosphate (RBP), glyceraldehyde 3-phosphate (G3P) and ammonia. The ammonia is provided by the PdxT subunit. Can also use ribulose 5-phosphate and dihydroxyacetone phosphate as substrates, resulting from enzyme-catalyzed isomerization of RBP and G3P, respectively. In Salinispora arenicola (strain CNS-205), this protein is Pyridoxal 5'-phosphate synthase subunit PdxS.